Consider the following 506-residue polypeptide: Protein spinster homolog 1 (506 aa).

A disordered region spans residues 1–42 (MSQADADITPFFADDNEGEGPVENGVGSPLPEDEEEESPSGV). A compositionally biased stretch (low complexity) spans 21–30 (PVENGVGSPL). 12 helical membrane passes run 52 to 71 (IVLC…VAGV), 87 to 107 (GLLQ…FGYL), 115 to 135 (LIMC…SFIG), 149 to 169 (VGVG…DLFV), 176 to 196 (MLSI…IVGS), 207 to 227 (WALR…MLVV), 266 to 286 (FGFT…PAFL), 310 to 330 (LIFG…GVQA), 344 to 364 (LVCA…IMFA), 373 to 393 (VFIF…ADIL), 408 to 428 (FQIV…IGVV), and 450 to 470 (LLCS…AVFI).

This sequence belongs to the major facilitator superfamily. Spinster (TC 2.A.1.49) family. As to expression, expressed in yolk cells.

The protein resides in the lysosome membrane. The catalysed reaction is a 1-acyl-sn-glycero-3-phosphocholine(out) + H(+)(out) = a 1-acyl-sn-glycero-3-phosphocholine(in) + H(+)(in). It catalyses the reaction a 1-acyl-sn-glycero-3-phosphoethanolamine(out) + H(+)(out) = a 1-acyl-sn-glycero-3-phosphoethanolamine(in) + H(+)(in). It carries out the reaction a 1-O-(1Z-alkenyl)-sn-glycero-3-phosphocholine(out) + H(+)(out) = a 1-O-(1Z-alkenyl)-sn-glycero-3-phosphocholine(in) + H(+)(in). The enzyme catalyses a 1-O-(1Z-alkenyl)-sn-glycero-3-phosphoethanolamine(out) + H(+)(out) = a 1-O-(1Z-alkenyl)-sn-glycero-3-phosphoethanolamine(in) + H(+)(in). In terms of biological role, mediates the rate-limiting, proton-dependent, lysosomal efflux of lysophospholipids. Selective for zwitterionic headgroups such as lysophosphatidylcholine (LPC) and lysophosphatidylethanolamine (LPE). Essential player in lysosomal homeostasis. Critical for embryogenesis. Involved in the regulation of developmental senescence. This chain is Protein spinster homolog 1 (spns1), found in Danio rerio (Zebrafish).